The sequence spans 66 residues: Large ribosomal subunit protein bL35 (66 aa).

This sequence belongs to the bacterial ribosomal protein bL35 family.

The chain is Large ribosomal subunit protein bL35 from Thermodesulfovibrio yellowstonii (strain ATCC 51303 / DSM 11347 / YP87).